Reading from the N-terminus, the 208-residue chain is UPF0316 protein SERP1448 (208 aa).

Transmembrane regions (helical) follow at residues 8–28 (PWLM…FLTM), 40–60 (VAAV…GLVM), and 66–86 (IQNI…GMKI).

It belongs to the UPF0316 family.

The protein resides in the cell membrane. The chain is UPF0316 protein SERP1448 from Staphylococcus epidermidis (strain ATCC 35984 / DSM 28319 / BCRC 17069 / CCUG 31568 / BM 3577 / RP62A).